Consider the following 227-residue polypeptide: YEATS domain-containing protein 4 (227 aa).

A YEATS domain is found at 15 to 158; the sequence is RVKGVTIVKP…AMMQQLLTTS (144 aa). Residue Lys37 forms a Glycyl lysine isopeptide (Lys-Gly) (interchain with G-Cter in SUMO2) linkage. The interval 93-97 is diacetylated histone H3 binding; the sequence is WGEFE. Residues 163 to 227 are interaction with MLLT10; the sequence is LGAYKHETEF…LEEDDQAKDI (65 aa). The tract at residues 168 to 227 is interaction with TACC1; sequence HETEFAELEVKTREKLEAAKKKTSFEIAELKERLKASRETINCLKNEIRKLEEDDQAKDI. Positions 178 to 226 form a coiled coil; sequence KTREKLEAAKKKTSFEIAELKERLKASRETINCLKNEIRKLEEDDQAKD.

In terms of assembly, component of numerous complexes with chromatin remodeling and histone acetyltransferase activity. Component of the NuA4 histone acetyltransferase complex which contains the catalytic subunit KAT5/TIP60 and the subunits EP400, TRRAP/PAF400, BRD8/SMAP, EPC1, DMAP1/DNMAP1, RUVBL1/TIP49, RUVBL2, ING3, actin, ACTL6A/BAF53A, MORF4L1/MRG15, MORF4L2/MRGX, MRGBP, YEATS4/GAS41, VPS72/YL1 and MEAF6. The NuA4 complex interacts with MYC and the adenovirus E1A protein. Component of a NuA4-related complex which contains EP400, TRRAP/PAF400, SRCAP, BRD8/SMAP, EPC1, DMAP1/DNMAP1, RUVBL1/TIP49, RUVBL2, actin, ACTL6A/BAF53A, VPS72 and YEATS4/GAS41. Interacts with MLLT10/AF10. Also interacts with the SWI/SNF component SMARCB1/BAF47, TACC1 and TACC2, and the nuclear matrix protein NUMA1. In terms of tissue distribution, expressed in brain, heart, kidney, liver, lung, pancreas, placenta and skeletal muscle.

The protein localises to the nucleus. In terms of biological role, chromatin reader component of the NuA4 histone acetyltransferase (HAT) complex, a complex involved in transcriptional activation of select genes principally by acetylation of nucleosomal histones H4 and H2A. Specifically recognizes and binds acylated histone H3, with a preference for histone H3 diacetylated at 'Lys-18' and 'Lys-27' (H3K18ac and H3K27ac) or histone H3 diacetylated at 'Lys-14' and 'Lys-27' (H3K14ac and H3K27ac). Also able to recognize and bind crotonylated histone H3. May also recognize and bind histone H3 succinylated at 'Lys-122' (H3K122succ); additional evidences are however required to confirm this result in vivo. Plays a key role in histone variant H2AZ1/H2A.Z deposition into specific chromatin regions: recognizes and binds H3K14ac and H3K27ac on the promoters of actively transcribed genes and recruits NuA4-related complex to deposit H2AZ1/H2A.Z. H2AZ1/H2A.Z deposition is required for maintenance of embryonic stem cell. The protein is YEATS domain-containing protein 4 of Homo sapiens (Human).